The following is a 505-amino-acid chain: Maturase K (505 aa).

Belongs to the intron maturase 2 family. MatK subfamily.

It is found in the plastid. The protein localises to the chloroplast. Its function is as follows. Usually encoded in the trnK tRNA gene intron. Probably assists in splicing its own and other chloroplast group II introns. The polypeptide is Maturase K (Micranthes integrifolia (Wholeleaf saxifrage)).